A 2194-amino-acid polypeptide reads, in one-letter code: Glutamate synthase [NADH], amyloplastic (2194 aa).

The N-terminal 101 residues, 1–101 (MSNSLSLTFT…LYDPAFDKDS (101 aa)), are a transit peptide targeting the amyloplast. C102 acts as the Nucleophile in catalysis. Residues 102-503 (CGVGFVAELN…PGMMLLVDFE (402 aa)) enclose the Glutamine amidotransferase type-2 domain. Positions 1021 to 1045 (GGKSNTGEGGEQPSRMEPLADGSRN) are disordered. Residue 1193 to 1250 (LAETHQTLVANDLRGRTTLQTDGQLKTGRDVAIAALLGAEEYGFSTAPLITLGCIMMR) coordinates FMN. C1246, C1252, and C1257 together coordinate [3Fe-4S] cluster. An NAD(+)-binding site is contributed by 1974–1988 (GGGDTGTDCIGTSIR).

Belongs to the glutamate synthase family. In terms of assembly, monomer. [3Fe-4S] cluster is required as a cofactor. FAD serves as cofactor. The cofactor is FMN. Expressed in infected cells in root nodules. Barely detected in roots and stems.

It localises to the plastid. The protein localises to the amyloplast. The enzyme catalyses 2 L-glutamate + NAD(+) = L-glutamine + 2-oxoglutarate + NADH + H(+). It functions in the pathway amino-acid biosynthesis; L-glutamate biosynthesis via GLT pathway; L-glutamate from 2-oxoglutarate and L-glutamine (NAD(+) route): step 1/1. Its pathway is energy metabolism; nitrogen metabolism. With respect to regulation, inhibited by malate, citrate, glutamate, NAD(+) and azaserine, but not by 2-2' dipyridil and N-ethylmaleimide. Functionally, required for the assimilation of symbiotically fixed nitrogen into amino acids in root nodules. In Medicago sativa (Alfalfa), this protein is Glutamate synthase [NADH], amyloplastic.